A 262-amino-acid chain; its full sequence is MTAETHLQGVEISAAQFFEIWHHYDSDGNGYMDGKELQNFIQELQQARKKAGLDLTPEMKAFVDQYGKATDGKIGIVELAQVLPTEENFLLFFRCQQLKSSEDFMQTWRKYDSDHSGFIDSEELKSFLKDLLQKANKQIEDSKLTEYTEIMLRMFDANNDGKLELTELARLLPVQENFLIKFQGVKMCAKEFNKAFEMYDQDGNGYIDENELDALLKDLCEKNKKELDINNLATYKKSIMALSDGGKLYRAELALILCAEEN.

At Thr-2 the chain carries N-acetylthreonine. EF-hand domains are found at residues 12–47 (ISAA…LQQA), 54–89 (DLTP…EENF), 99–134 (KSSE…LLQK), 143–178 (KLTE…QENF), and 187–222 (MCAK…LCEK). Asp-25, Asp-27, Asn-29, Tyr-31, and Glu-36 together coordinate Ca(2+). Residues Asp-112, Asp-114, Ser-116, Glu-123, Asp-156, Asn-158, Asp-160, Lys-162, Glu-167, Asp-200, Asp-202, Asn-204, Tyr-206, and Glu-211 each coordinate Ca(2+).

The protein belongs to the calbindin family. In terms of tissue distribution, highly abundant in supporting cells. Also present in hair cells.

Buffers cytosolic calcium. May stimulate a membrane Ca(2+)-ATPase and a 3',5'-cyclic nucleotide phosphodiesterase. This chain is Calbindin (CALB1), found in Gallus gallus (Chicken).